Here is a 416-residue protein sequence, read N- to C-terminus: Lipoyl synthase, mitochondrial (416 aa).

The N-terminal 33 residues, 1–33, are a transit peptide targeting the mitochondrion; sequence MAAASTNRLRLLYTSTRASLPQSTPSILTTRTY. The segment at 20–52 is disordered; it reads LPQSTPSILTTRTYATTDSSTSATSTPKPRRRT. Residues 29–46 are compositionally biased toward low complexity; the sequence is TTRTYATTDSSTSATSTP. Residues Cys133, Cys138, Cys144, Cys164, Cys168, Cys171, and Ser379 each contribute to the [4Fe-4S] cluster site. The region spanning 147-368 is the Radical SAM core domain; the sequence is GGDKAAATAT…QRRAEELGFL (222 aa).

This sequence belongs to the radical SAM superfamily. Lipoyl synthase family. [4Fe-4S] cluster serves as cofactor.

Its subcellular location is the mitochondrion. It catalyses the reaction [[Fe-S] cluster scaffold protein carrying a second [4Fe-4S](2+) cluster] + N(6)-octanoyl-L-lysyl-[protein] + 2 oxidized [2Fe-2S]-[ferredoxin] + 2 S-adenosyl-L-methionine + 4 H(+) = [[Fe-S] cluster scaffold protein] + N(6)-[(R)-dihydrolipoyl]-L-lysyl-[protein] + 4 Fe(3+) + 2 hydrogen sulfide + 2 5'-deoxyadenosine + 2 L-methionine + 2 reduced [2Fe-2S]-[ferredoxin]. It functions in the pathway protein modification; protein lipoylation via endogenous pathway; protein N(6)-(lipoyl)lysine from octanoyl-[acyl-carrier-protein]: step 2/2. In terms of biological role, catalyzes the radical-mediated insertion of two sulfur atoms into the C-6 and C-8 positions of the octanoyl moiety bound to the lipoyl domains of lipoate-dependent enzymes, thereby converting the octanoylated domains into lipoylated derivatives. In Aspergillus niger (strain ATCC MYA-4892 / CBS 513.88 / FGSC A1513), this protein is Lipoyl synthase, mitochondrial.